The following is a 173-amino-acid chain: Copper transport protein ctr5 (173 aa).

The Extracellular portion of the chain corresponds to 1–54; that stretch reads MSLSKMSMSGMSGMGMGSSSNSSAATCRMSMLWNWYIHDSCFLAKSWHINTGNK. Residues 55-75 traverse the membrane as a helical segment; it reads FAGSIIGIFFFAVAIEGLSLV. Over 76 to 135 the chain is Cytoplasmic; the sequence is QRMFDRWIVAHSNGKTLSGPLRIFFPSSTVHVTVWQQLIRAAMYSSFYLSATILMLIVMS. The chain crosses the membrane as a helical span at residues 136–156; that stretch reads FNGYAILFGFVGAWIGFFLFA. Residues 157–173 are Extracellular-facing; it reads SDTYGTPSTGTGCCESR.

Belongs to the copper transporter (Ctr) (TC 1.A.56) family. SLC31A subfamily. In terms of assembly, interacts with ctr4.

The protein localises to the membrane. Required for high affinity copper (probably reduced Cu I) transport into the cell. The chain is Copper transport protein ctr5 (ctr5) from Schizosaccharomyces pombe (strain 972 / ATCC 24843) (Fission yeast).